A 229-amino-acid polypeptide reads, in one-letter code: Geodin cluster transcription factor (229 aa).

Residues 12–39 constitute a DNA-binding region (zn(2)-C6 fungal-type); it reads CHACAASKVRCSKEKPTCSRCSKRGTTC. Disordered regions lie at residues 50–100 and 141–169; these read KQLN…PGTT and TANS…RPPT. Polar residues-rich tracts occupy residues 51–71 and 153–164; these read QLNN…SLAT and ITSSHNTSSNSP.

The protein localises to the nucleus. Its function is as follows. Transcription factor that regulates the expression of the gene cluster that mediates the biosynthesis of geodin, an intermediate in the biosynthesis of other natural products. In Aspergillus terreus (strain NIH 2624 / FGSC A1156), this protein is Geodin cluster transcription factor.